A 49-amino-acid chain; its full sequence is Large ribosomal subunit protein bL33B (49 aa).

It belongs to the bacterial ribosomal protein bL33 family.

This chain is Large ribosomal subunit protein bL33B, found in Staphylococcus saprophyticus subsp. saprophyticus (strain ATCC 15305 / DSM 20229 / NCIMB 8711 / NCTC 7292 / S-41).